Here is an 860-residue protein sequence, read N- to C-terminus: Photoactivated adenylate cyclase subunit beta (860 aa).

A BLUF 1 domain is found at 56-149; that stretch reads LRRLMYLSKS…GRMYGDWHMK (94 aa). The 129-residue stretch at 205-333 folds into the Guanylate cyclase 1 domain; the sequence is VVTFIYLVEF…DCINTTSRIA (129 aa). Residues 420 to 443 are disordered; it reads RPPIFDDTPKGKPRPRTPGYGGRQ. Residues 471-563 enclose the BLUF 2 domain; sequence LTTLTYISQA…RAYPAEWTLT (93 aa). Residues 619-748 enclose the Guanylate cyclase 2 domain; it reads VMLATDICSF…AVSARVMEVE (130 aa). Residues 819 to 860 form a disordered region; it reads KPLALEPEEAKQDYRVSPGRMRHGDSGRRSNSAQGKRSTQVR. Polar residues predominate over residues 847–860; sequence RSNSAQGKRSTQVR.

The protein belongs to the adenylyl cyclase class-4/guanylyl cyclase family. In terms of assembly, heterotetramer of two alpha and two beta subunits. FAD is required as a cofactor.

It localises to the cell projection. It is found in the cilium. The protein resides in the flagellum. The enzyme catalyses ATP = 3',5'-cyclic AMP + diphosphate. Its function is as follows. Acts as a photoreceptor for the step-up photophobic response. This chain is Photoactivated adenylate cyclase subunit beta, found in Euglena longa (Euglenophycean alga).